The chain runs to 338 residues: Heat-inducible transcription repressor HrcA (338 aa).

Belongs to the HrcA family.

Functionally, negative regulator of class I heat shock genes (grpE-dnaK-dnaJ and groELS operons). Prevents heat-shock induction of these operons. This is Heat-inducible transcription repressor HrcA from Thermotoga maritima (strain ATCC 43589 / DSM 3109 / JCM 10099 / NBRC 100826 / MSB8).